Consider the following 83-residue polypeptide: uncharacterized protein (83 aa).

Positions 40-65 are disordered; the sequence is RMQAGASPDEDNDVNGETSFSRSFGG. Positions 54-65 are enriched in polar residues; the sequence is NGETSFSRSFGG.

This is an uncharacterized protein from Dictyostelium discoideum (Social amoeba).